Here is a 416-residue protein sequence, read N- to C-terminus: Enolase (416 aa).

Glutamine 160 is a (2R)-2-phosphoglycerate binding site. Glutamate 204 serves as the catalytic Proton donor. Mg(2+)-binding residues include aspartate 239, glutamate 280, and aspartate 306. (2R)-2-phosphoglycerate-binding residues include lysine 331, arginine 360, serine 361, and lysine 382. The Proton acceptor role is filled by lysine 331.

Belongs to the enolase family. Mg(2+) serves as cofactor.

Its subcellular location is the cytoplasm. It is found in the secreted. The protein localises to the cell surface. It carries out the reaction (2R)-2-phosphoglycerate = phosphoenolpyruvate + H2O. Its pathway is carbohydrate degradation; glycolysis; pyruvate from D-glyceraldehyde 3-phosphate: step 4/5. Functionally, catalyzes the reversible conversion of 2-phosphoglycerate (2-PG) into phosphoenolpyruvate (PEP). It is essential for the degradation of carbohydrates via glycolysis. The protein is Enolase of Sulfolobus acidocaldarius (strain ATCC 33909 / DSM 639 / JCM 8929 / NBRC 15157 / NCIMB 11770).